The primary structure comprises 389 residues: Na(+)/H(+) antiporter NhaA (389 aa).

11 helical membrane passes run Ile-17–Phe-37, Leu-59–Val-79, Ser-95–Phe-115, Ala-124–Leu-144, Val-154–Phe-174, Ser-177–Leu-197, Leu-213–Ile-233, Phe-261–Leu-281, Ile-292–Val-312, Ile-328–Leu-348, and Leu-363–Val-383.

Belongs to the NhaA Na(+)/H(+) (TC 2.A.33) antiporter family.

The protein localises to the cell inner membrane. It carries out the reaction Na(+)(in) + 2 H(+)(out) = Na(+)(out) + 2 H(+)(in). Functionally, na(+)/H(+) antiporter that extrudes sodium in exchange for external protons. This chain is Na(+)/H(+) antiporter NhaA, found in Shewanella oneidensis (strain ATCC 700550 / JCM 31522 / CIP 106686 / LMG 19005 / NCIMB 14063 / MR-1).